Reading from the N-terminus, the 204-residue chain is MSGREDEEEDLGTAMQKIPIPVNVFDKEPMDLDTVFGFADGVREIIEDSNLLLEESREFDTNDSKPSRNFSNLPTATRGRLHAPKRSGNKRGRQKRLSFKSPSDLFDSKFGITDKSCSHCGTRKTPLWREGPRGAGTLCNACGMRYRTGRLLPEYRPASSPDFKPNVHSNFHRKVMEIRRERKSSPPNSFGFSESYHSTRKLGF.

The segment covering 57–66 (REFDTNDSKP) has biased composition (basic and acidic residues). Positions 57–102 (REFDTNDSKPSRNFSNLPTATRGRLHAPKRSGNKRGRQKRLSFKSP) are disordered. The span at 79 to 98 (GRLHAPKRSGNKRGRQKRLS) shows a compositional bias: basic residues. The segment at 111–165 (GITDKSCSHCGTRKTPLWREGPRGAGTLCNACGMRYRTGRLLPEYRPASSPDFKP) adopts a GATA-type zinc-finger fold. Residues 180-204 (RERKSSPPNSFGFSESYHSTRKLGF) form a disordered region. Over residues 185–196 (SPPNSFGFSESY) the composition is skewed to polar residues.

This sequence belongs to the type IV zinc-finger family. Class A subfamily.

It localises to the nucleus. In terms of biological role, transcriptional activator that specifically binds 5'-GATA-3' or 5'-GAT-3' motifs within gene promoters. May be involved in the regulation of some light-responsive genes. The protein is GATA transcription factor 14 (GATA14) of Arabidopsis thaliana (Mouse-ear cress).